The chain runs to 446 residues: Phosphoglucosamine mutase (446 aa).

S103 acts as the Phosphoserine intermediate in catalysis. Residues S103, D242, D244, and D246 each contribute to the Mg(2+) site. Position 103 is a phosphoserine (S103).

This sequence belongs to the phosphohexose mutase family. Requires Mg(2+) as cofactor. In terms of processing, activated by phosphorylation.

The enzyme catalyses alpha-D-glucosamine 1-phosphate = D-glucosamine 6-phosphate. Its function is as follows. Catalyzes the conversion of glucosamine-6-phosphate to glucosamine-1-phosphate. The sequence is that of Phosphoglucosamine mutase from Vibrio vulnificus (strain YJ016).